The sequence spans 143 residues: Large ribosomal subunit protein uL11 (143 aa).

It belongs to the universal ribosomal protein uL11 family. Part of the ribosomal stalk of the 50S ribosomal subunit. Interacts with L10 and the large rRNA to form the base of the stalk. L10 forms an elongated spine to which L12 dimers bind in a sequential fashion forming a multimeric L10(L12)X complex. Post-translationally, one or more lysine residues are methylated.

Its function is as follows. Forms part of the ribosomal stalk which helps the ribosome interact with GTP-bound translation factors. This is Large ribosomal subunit protein uL11 from Azoarcus sp. (strain BH72).